The sequence spans 475 residues: Ribulose bisphosphate carboxylase large chain (475 aa).

The propeptide occupies 1-2; the sequence is MA. P3 is modified (N-acetylproline). Substrate is bound by residues N123 and T173. Residue K175 is the Proton acceptor of the active site. K177 serves as a coordination point for substrate. Residues K201, D203, and E204 each coordinate Mg(2+). N6-carboxylysine is present on K201. H294 acts as the Proton acceptor in catalysis. Substrate is bound by residues R295, H327, and S379.

Belongs to the RuBisCO large chain family. Type I subfamily. In terms of assembly, heterohexadecamer of 8 large chains and 8 small chains. It depends on Mg(2+) as a cofactor.

The protein resides in the plastid. The protein localises to the chloroplast. The enzyme catalyses 2 (2R)-3-phosphoglycerate + 2 H(+) = D-ribulose 1,5-bisphosphate + CO2 + H2O. It carries out the reaction D-ribulose 1,5-bisphosphate + O2 = 2-phosphoglycolate + (2R)-3-phosphoglycerate + 2 H(+). Functionally, ruBisCO catalyzes two reactions: the carboxylation of D-ribulose 1,5-bisphosphate, the primary event in carbon dioxide fixation, as well as the oxidative fragmentation of the pentose substrate in the photorespiration process. Both reactions occur simultaneously and in competition at the same active site. The protein is Ribulose bisphosphate carboxylase large chain of Ostreococcus tauri.